Here is a 152-residue protein sequence, read N- to C-terminus: Protein-export protein SecB (152 aa).

Belongs to the SecB family. In terms of assembly, homotetramer, a dimer of dimers. One homotetramer interacts with 1 SecA dimer.

The protein resides in the cytoplasm. Functionally, one of the proteins required for the normal export of preproteins out of the cell cytoplasm. It is a molecular chaperone that binds to a subset of precursor proteins, maintaining them in a translocation-competent state. It also specifically binds to its receptor SecA. This chain is Protein-export protein SecB, found in Rickettsia felis (strain ATCC VR-1525 / URRWXCal2) (Rickettsia azadi).